Consider the following 127-residue polypeptide: Ribonuclease P protein component (127 aa).

It belongs to the RnpA family. As to quaternary structure, consists of a catalytic RNA component (M1 or rnpB) and a protein subunit.

The catalysed reaction is Endonucleolytic cleavage of RNA, removing 5'-extranucleotides from tRNA precursor.. Functionally, RNaseP catalyzes the removal of the 5'-leader sequence from pre-tRNA to produce the mature 5'-terminus. It can also cleave other RNA substrates such as 4.5S RNA. The protein component plays an auxiliary but essential role in vivo by binding to the 5'-leader sequence and broadening the substrate specificity of the ribozyme. This Rippkaea orientalis (strain PCC 8801 / RF-1) (Cyanothece sp. (strain PCC 8801)) protein is Ribonuclease P protein component.